The sequence spans 354 residues: Rhodopsin (354 aa).

Residues 1–36 (MNGTEGPYFYVPMVNTTGIVRSPYEYPQYYLVSPAA) lie on the Extracellular side of the membrane. 2 N-linked (GlcNAc...) asparagine glycosylation sites follow: asparagine 2 and asparagine 15. The helical transmembrane segment at 37–61 (YACLGAYMFFLILVGFPINFLTLYV) threads the bilayer. The Cytoplasmic portion of the chain corresponds to 62 to 73 (TIEHKKLRTPLN). A helical transmembrane segment spans residues 74 to 96 (YILLNLAVADLFMVFGGFTTTIY). Residues 97–110 (TSMHGYFVLGRLGC) are Extracellular-facing. Cysteine 110 and cysteine 187 are joined by a disulfide. Residues 111–133 (NLEGYFATLGGEIGLWSLVVLAV) form a helical membrane-spanning segment. The 'Ionic lock' involved in activated form stabilization motif lies at 134–136 (ERW). The Cytoplasmic portion of the chain corresponds to 134-152 (ERWLVVCKPISNFRFSENH). Residues 153-173 (AIMGLVFTWIMANSCAAPPLL) form a helical membrane-spanning segment. Topologically, residues 174–202 (GWSRYIPEGMQCSCGVDYYTRAEGFNNES) are extracellular. A helical membrane pass occupies residues 203-224 (FVIYMFICHFCIPLIVVFFCYG). Residues 225–252 (RLLCAVKEAAAAQQESETTQRAEREVTR) are Cytoplasmic-facing. A helical membrane pass occupies residues 253 to 274 (MVVIMVIGFLVCWIPYASVAWY). Residues 275-286 (IFTHQGSEFGPL) are Extracellular-facing. The chain crosses the membrane as a helical span at residues 287–308 (FMTVPAFFAKSASIYNPLIYIC). Lysine 296 is subject to N6-(retinylidene)lysine. Residues 309 to 354 (MNKQFRHCMITTLCCGKNPFEEEEGASTTASKTEASSVSSSSVSPA) are Cytoplasmic-facing. Residues cysteine 322 and cysteine 323 are each lipidated (S-palmitoyl cysteine). Residues 333 to 354 (GASTTASKTEASSVSSSSVSPA) form a disordered region. Over residues 334-354 (ASTTASKTEASSVSSSSVSPA) the composition is skewed to low complexity.

The protein belongs to the G-protein coupled receptor 1 family. Opsin subfamily. Phosphorylated on some or all of the serine and threonine residues present in the C-terminal region. In terms of processing, contains one covalently linked retinal chromophore.

Its subcellular location is the membrane. It localises to the cell projection. The protein localises to the cilium. The protein resides in the photoreceptor outer segment. Functionally, photoreceptor required for image-forming vision at low light intensity. While most salt water fish species use retinal as chromophore, most freshwater fish use 3-dehydroretinal, or a mixture of retinal and 3-dehydroretinal. Light-induced isomerization of 11-cis to all-trans retinal triggers a conformational change that activates signaling via G-proteins. Subsequent receptor phosphorylation mediates displacement of the bound G-protein alpha subunit by arrestin and terminates signaling. This Poecilia reticulata (Guppy) protein is Rhodopsin (rho).